The sequence spans 208 residues: MAKLAKNKQMAVLNYIHKQVEDHGYPPTVREICSAVGLSSTSTVHGHISRLIEQGFLQKDPSKPRALEITPKGLDILGVKPIQKEIPMLGVVTAGQPILAVENATEFFPIPPSIQDNNDLFMLTIRGTSMIKAGIFNGDQVIVRKQSTAKNGDIVIAMNDDNEATCKRFYKEKTRFRLQPENDTMEPIFLDNVKILGKVVGLFRDHIF.

A DNA-binding region (H-T-H motif) is located at residues 29-49 (VREICSAVGLSSTSTVHGHIS). Catalysis depends on for autocatalytic cleavage activity residues Ser-129 and Lys-167.

The protein belongs to the peptidase S24 family. Homodimer.

It catalyses the reaction Hydrolysis of Ala-|-Gly bond in repressor LexA.. Functionally, represses a number of genes involved in the response to DNA damage (SOS response), including recA and lexA. In the presence of single-stranded DNA, RecA interacts with LexA causing an autocatalytic cleavage which disrupts the DNA-binding part of LexA, leading to derepression of the SOS regulon and eventually DNA repair. This chain is LexA repressor, found in Limosilactobacillus reuteri (strain DSM 20016) (Lactobacillus reuteri).